The chain runs to 321 residues: tRNA U34 carboxymethyltransferase (321 aa).

Residues Lys90, Trp104, Lys109, Gly129, 151–153 (DPT), 180–181 (IE), Met195, Tyr199, and Arg314 contribute to the carboxy-S-adenosyl-L-methionine site.

Belongs to the class I-like SAM-binding methyltransferase superfamily. CmoB family. Homotetramer.

The enzyme catalyses carboxy-S-adenosyl-L-methionine + 5-hydroxyuridine(34) in tRNA = 5-carboxymethoxyuridine(34) in tRNA + S-adenosyl-L-homocysteine + H(+). Its function is as follows. Catalyzes carboxymethyl transfer from carboxy-S-adenosyl-L-methionine (Cx-SAM) to 5-hydroxyuridine (ho5U) to form 5-carboxymethoxyuridine (cmo5U) at position 34 in tRNAs. This chain is tRNA U34 carboxymethyltransferase, found in Haemophilus influenzae (strain PittGG).